The sequence spans 491 residues: Angiopoietin-related protein 1 (491 aa).

The N-terminal stretch at 1–23 (MKTFTWTLGVLFFLLVDTGHCRG) is a signal peptide. A coiled-coil region spans residues 80–168 (ITRMDLENLK…LNVTTEMLKM (89 aa)). N160 and N188 each carry an N-linked (GlcNAc...) asparagine glycan. Residues 271-491 (FINEGPFKDC…AVQMMIKPID (221 aa)) enclose the Fibrinogen C-terminal domain. Intrachain disulfides connect C280–C309 and C432–C445.

As to expression, highly expressed in adrenal gland, placenta, thyroid gland, heart, skeletal muscle and small intestine. Weakly expressed in testis, ovary, colon, pancreas, kidney and stomach.

The protein localises to the secreted. This Homo sapiens (Human) protein is Angiopoietin-related protein 1 (ANGPTL1).